Consider the following 508-residue polypeptide: Endoglucanase 6 (508 aa).

A signal peptide spans 1–33 (MLAASLRVEAVAVVAAAVLVLLLSPAAVVVVAG). Asp89 serves as the catalytic Nucleophile. Catalysis depends on residues His419, Asp471, and Glu480.

It belongs to the glycosyl hydrolase 9 (cellulase E) family.

The protein resides in the secreted. The enzyme catalyses Endohydrolysis of (1-&gt;4)-beta-D-glucosidic linkages in cellulose, lichenin and cereal beta-D-glucans.. This chain is Endoglucanase 6, found in Oryza sativa subsp. japonica (Rice).